Here is a 325-residue protein sequence, read N- to C-terminus: MTFAKITQAAHYVPENVVSNDDLSKIMDTNDEWIYSRTGIKNRHISTGENTSDLATKVAKQLIENSGVDPELIDFIIVATVTPDSMMPSTAARVQAQVGATNAFAYDLTAACSGFVFALSTAEKLISSGAYQRGIVIGAEVFSKVIDWSDRSTAVLFGDGAAGVLLDNSGSQPLIIAEKMQTDGKRGGSLLSSYADIQTPFASVSYEGSNLSMEGRAIFDFAVRDVPKNIQATLEKSDLAAEEIDYYLLHQANSRILDKMAKKLGVTRDKFLQNMQEYGNTSAASIPILLSESVKNGIFSLDGQTKVVLTGFGGGLTWGTAIINL.

Active-site residues include cysteine 112 and histidine 250. Positions 251 to 255 (QANSR) are ACP-binding. The active site involves asparagine 280.

Belongs to the thiolase-like superfamily. FabH family. Homodimer.

It localises to the cytoplasm. It catalyses the reaction malonyl-[ACP] + acetyl-CoA + H(+) = 3-oxobutanoyl-[ACP] + CO2 + CoA. Its pathway is lipid metabolism; fatty acid biosynthesis. Its function is as follows. Catalyzes the condensation reaction of fatty acid synthesis by the addition to an acyl acceptor of two carbons from malonyl-ACP. Catalyzes the first condensation reaction which initiates fatty acid synthesis and may therefore play a role in governing the total rate of fatty acid production. Possesses both acetoacetyl-ACP synthase and acetyl transacylase activities. Its substrate specificity determines the biosynthesis of branched-chain and/or straight-chain of fatty acids. This is Beta-ketoacyl-[acyl-carrier-protein] synthase III from Lactococcus lactis subsp. cremoris (strain MG1363).